The primary structure comprises 119 residues: Large ribosomal subunit protein bL19 (119 aa).

It belongs to the bacterial ribosomal protein bL19 family.

Functionally, this protein is located at the 30S-50S ribosomal subunit interface and may play a role in the structure and function of the aminoacyl-tRNA binding site. The polypeptide is Large ribosomal subunit protein bL19 (Treponema denticola (strain ATCC 35405 / DSM 14222 / CIP 103919 / JCM 8153 / KCTC 15104)).